A 298-amino-acid polypeptide reads, in one-letter code: MTDSHYIGRFAPSPSGELHFGSLIAALGSYLQARAQRGIWRVRIEDIDPPREVPGAAATILRQLEHYGLHWDGEVLWQSQRHEAYCEALAWLHEQGLSYYCTCPRSRIQRLGGIYDGHCRTLCHGPENAAVRIKQQHPVMHFHDALRGDIQADPQLASEDFIIHRRDGLFAYNLAVVVDDHFQGVTEIVRGADLIEPTVRQLSLYKQFGWRAPGYVHLPLALNEQGAKLSKQNHAPALATGDPRPVLVQALRFLGQRDVVAWQEMSVEELLRFAVAHWRLTAVPTSANVNPAFSNASR.

L-glutamate-binding positions include 9 to 13 and E45; that span reads RFAPS. The 'HIGH' region signature appears at 12–22; sequence PSPSGELHFGS. The Zn(2+) site is built by C101, C103, Y115, and C119. L-glutamate is bound by residues Y172 and R190. A 'KMSKS' region motif is present at residues 228-232; it reads KLSKQ. Position 231 (K231) interacts with ATP.

Belongs to the class-I aminoacyl-tRNA synthetase family. GluQ subfamily. It depends on Zn(2+) as a cofactor.

Functionally, catalyzes the tRNA-independent activation of glutamate in presence of ATP and the subsequent transfer of glutamate onto a tRNA(Asp). Glutamate is transferred on the 2-amino-5-(4,5-dihydroxy-2-cyclopenten-1-yl) moiety of the queuosine in the wobble position of the QUC anticodon. The protein is Glutamyl-Q tRNA(Asp) synthetase of Salmonella choleraesuis (strain SC-B67).